An 840-amino-acid chain; its full sequence is Sorting nexin-25 (840 aa).

Residues 1–164 (MDKALKEVFD…MLLAQLAYRE (164 aa)) form the PXA domain. In terms of domain architecture, RGS spans 287-401 (QFEDILANTF…IVSDLYEKLL (115 aa)). The stretch at 434 to 499 (TNQINEQASF…RTDLQLHMAR (66 aa)) forms a coiled coil. A PX domain is found at 508–628 (GMWKASITSG…AFLSPSPDYL (121 aa)). The residue at position 665 (S665) is a Phosphoserine.

This sequence belongs to the sorting nexin family.

It localises to the endosome membrane. Its function is as follows. May be involved in several stages of intracellular trafficking. This is Sorting nexin-25 (SNX25) from Homo sapiens (Human).